Here is a 490-residue protein sequence, read N- to C-terminus: Bifunctional protein HldE (490 aa).

The interval 1–330 is ribokinase; the sequence is MSRFDTLLQS…RKILPHASLA (330 aa). 205–208 is an ATP binding site; the sequence is NRKE. The active site involves Asp275. Positions 358–490 are cytidylyltransferase; sequence FTNGCFDILH…LVEKAREGTT (133 aa).

The protein in the N-terminal section; belongs to the carbohydrate kinase PfkB family. It in the C-terminal section; belongs to the cytidylyltransferase family. As to quaternary structure, homodimer.

The enzyme catalyses D-glycero-beta-D-manno-heptose 7-phosphate + ATP = D-glycero-beta-D-manno-heptose 1,7-bisphosphate + ADP + H(+). It catalyses the reaction D-glycero-beta-D-manno-heptose 1-phosphate + ATP + H(+) = ADP-D-glycero-beta-D-manno-heptose + diphosphate. The protein operates within nucleotide-sugar biosynthesis; ADP-L-glycero-beta-D-manno-heptose biosynthesis; ADP-L-glycero-beta-D-manno-heptose from D-glycero-beta-D-manno-heptose 7-phosphate: step 1/4. It participates in nucleotide-sugar biosynthesis; ADP-L-glycero-beta-D-manno-heptose biosynthesis; ADP-L-glycero-beta-D-manno-heptose from D-glycero-beta-D-manno-heptose 7-phosphate: step 3/4. Catalyzes the phosphorylation of D-glycero-D-manno-heptose 7-phosphate at the C-1 position to selectively form D-glycero-beta-D-manno-heptose-1,7-bisphosphate. Functionally, catalyzes the ADP transfer from ATP to D-glycero-beta-D-manno-heptose 1-phosphate, yielding ADP-D-glycero-beta-D-manno-heptose. The protein is Bifunctional protein HldE of Rhodopseudomonas palustris (strain BisB5).